We begin with the raw amino-acid sequence, 381 residues long: Subtilisin J (381 aa).

The first 29 residues, 1-29, serve as a signal peptide directing secretion; the sequence is MRSKKLWISLLFALTLIFTMAFSNMSVQA. A propeptide spanning residues 30 to 106 is cleaved from the precursor; sequence AGKSSTEKKY…VEEDHIAHEY (77 aa). The Inhibitor I9 domain maps to 38–103; the sequence is KYIVGFKQTM…VAYVEEDHIA (66 aa). Gln108 serves as a coordination point for Ca(2+). Residues 111-380 enclose the Peptidase S8 domain; that stretch reads PYGISQIKAP…KGLINVQAAA (270 aa). The active-site Charge relay system is Asp138. Asp147 provides a ligand contact to Ca(2+). His170 serves as the catalytic Charge relay system. Residues Leu181, Asn183, Ile185, Val187, Ala275, Tyr277, and Thr280 each contribute to the Ca(2+) site. Ser327 (charge relay system) is an active-site residue.

This sequence belongs to the peptidase S8 family. Requires Ca(2+) as cofactor.

The protein resides in the secreted. It catalyses the reaction Hydrolysis of proteins with broad specificity for peptide bonds, and a preference for a large uncharged residue in P1. Hydrolyzes peptide amides.. Its function is as follows. Subtilisin is an extracellular alkaline serine protease, it catalyzes the hydrolysis of proteins and peptide amides. The sequence is that of Subtilisin J (aprJ) from Geobacillus stearothermophilus (Bacillus stearothermophilus).